The primary structure comprises 692 residues: Vitamin B12-dependent ribonucleoside-diphosphate reductase (692 aa).

One can recognise an ATP-cone domain in the interval 7 to 95 (AKVRRRDGTL…IYRQRRAELR (89 aa)). Substrate-binding positions include Ser-177, 192 to 193 (GC), Gly-221, 375 to 379 (NPCGE), and 520 to 524 (PTGTI). An intrachain disulfide couples Cys-193 to Cys-388. The active-site Proton acceptor is the Asn-375. The Cysteine radical intermediate role is filled by Cys-377. The active-site Proton acceptor is the Glu-379.

It belongs to the ribonucleoside diphosphate reductase class-2 family. Adenosylcob(III)alamin is required as a cofactor.

The enzyme catalyses a 2'-deoxyribonucleoside 5'-diphosphate + [thioredoxin]-disulfide + H2O = a ribonucleoside 5'-diphosphate + [thioredoxin]-dithiol. Provides the precursors necessary for DNA synthesis. Catalyzes the biosynthesis of deoxyribonucleotides from the corresponding ribonucleotides. The sequence is that of Vitamin B12-dependent ribonucleoside-diphosphate reductase (nrdZ) from Mycobacterium tuberculosis (strain CDC 1551 / Oshkosh).